Reading from the N-terminus, the 216-residue chain is Nudix hydrolase 26, chloroplastic (216 aa).

The N-terminal 53 residues, 1–53 (MALYRPLLLHHPTSPSVTTFLRNYPSKPIKFSSLPFLHRCRKSRVSSSSARCC), are a transit peptide targeting the chloroplast. Residues 62–209 (GYRRNVGVCL…KKPVYKEVMS (148 aa)) form the Nudix hydrolase domain. Positions 95–116 (GGIDEGEDPRVAVMRELKEETG) match the Nudix box motif. The Mn(2+) site is built by Glu110 and Glu114.

The protein belongs to the Nudix hydrolase family. Requires Mg(2+) as cofactor. It depends on Mn(2+) as a cofactor. As to expression, expressed in roots, leaves, stems and inflorescences.

The protein localises to the plastid. It localises to the chloroplast. Its function is as follows. Mediates the hydrolysis of some nucleoside diphosphate derivatives. Can use diadenosine 5',5'''-P(1)P(5) pentaphosphate (Ap(5)A), diadenosine 5',5'''-P(1)P(4) tetraphosphate (Ap(4)A) and diadenosine 5',5'''-P(1)P(3) triphosphate (Ap(3)A) as substrates. The chain is Nudix hydrolase 26, chloroplastic (NUDT26) from Arabidopsis thaliana (Mouse-ear cress).